The sequence spans 263 residues: 4-hydroxy-tetrahydrodipicolinate reductase (263 aa).

NAD(+) contacts are provided by residues 8 to 13, Asp34, 99 to 101, and 125 to 128; these read GACGRM, GTT, and SPNY. Catalysis depends on His157, which acts as the Proton donor/acceptor. His158 is a (S)-2,3,4,5-tetrahydrodipicolinate binding site. Lys161 acts as the Proton donor in catalysis. 167–168 lines the (S)-2,3,4,5-tetrahydrodipicolinate pocket; it reads GT.

Belongs to the DapB family.

It localises to the cytoplasm. It catalyses the reaction (S)-2,3,4,5-tetrahydrodipicolinate + NAD(+) + H2O = (2S,4S)-4-hydroxy-2,3,4,5-tetrahydrodipicolinate + NADH + H(+). The enzyme catalyses (S)-2,3,4,5-tetrahydrodipicolinate + NADP(+) + H2O = (2S,4S)-4-hydroxy-2,3,4,5-tetrahydrodipicolinate + NADPH + H(+). It participates in amino-acid biosynthesis; L-lysine biosynthesis via DAP pathway; (S)-tetrahydrodipicolinate from L-aspartate: step 4/4. Functionally, catalyzes the conversion of 4-hydroxy-tetrahydrodipicolinate (HTPA) to tetrahydrodipicolinate. The polypeptide is 4-hydroxy-tetrahydrodipicolinate reductase (Methanosarcina barkeri (strain Fusaro / DSM 804)).